The chain runs to 101 residues: Ascorbate-specific PTS system EIIB component (101 aa).

Positions 3–96 constitute a PTS EIIB type-2 domain; sequence VRILAVCGNG…KLLKVIKEHF (94 aa). The active-site Phosphocysteine intermediate is cysteine 9. Residue cysteine 9 is modified to Phosphocysteine.

It localises to the cytoplasm. The enzyme catalyses N(pros)-phospho-L-histidyl-[protein] + L-ascorbate(out) = L-ascorbate 6-phosphate(in) + L-histidyl-[protein]. In terms of biological role, the phosphoenolpyruvate-dependent sugar phosphotransferase system (sugar PTS), a major carbohydrate active transport system, catalyzes the phosphorylation of incoming sugar substrates concomitantly with their translocation across the cell membrane. The enzyme II UlaABC PTS system is involved in ascorbate transport. The protein is Ascorbate-specific PTS system EIIB component (ulaB) of Shigella dysenteriae serotype 1 (strain Sd197).